The chain runs to 192 residues: Probable cobalt-precorrin-6B C(15)-methyltransferase (decarboxylating) (192 aa).

S-adenosyl-L-methionine is bound by residues threonine 20, 44-48 (GSGTG), glutamate 68, and alanine 96.

It belongs to the methyltransferase superfamily. Archaeal-type CbiT family.

The catalysed reaction is Co-precorrin-6B + S-adenosyl-L-methionine = Co-precorrin-7 + S-adenosyl-L-homocysteine + CO2. The protein operates within cofactor biosynthesis; adenosylcobalamin biosynthesis; cob(II)yrinate a,c-diamide from sirohydrochlorin (anaerobic route): step 8/10. Its function is as follows. Catalyzes the methylation of C-15 in cobalt-precorrin-6B followed by the decarboxylation of C-12 to form cobalt-precorrin-7. In Sulfolobus acidocaldarius (strain ATCC 33909 / DSM 639 / JCM 8929 / NBRC 15157 / NCIMB 11770), this protein is Probable cobalt-precorrin-6B C(15)-methyltransferase (decarboxylating).